Reading from the N-terminus, the 295-residue chain is Pyridoxal 5'-phosphate synthase subunit PdxS (295 aa).

A D-ribose 5-phosphate-binding site is contributed by Asp-25. Catalysis depends on Lys-82, which acts as the Schiff-base intermediate with D-ribose 5-phosphate. Gly-154 is a D-ribose 5-phosphate binding site. Arg-166 contributes to the D-glyceraldehyde 3-phosphate binding site. D-ribose 5-phosphate-binding positions include Gly-215 and 236-237 (GS).

This sequence belongs to the PdxS/SNZ family. As to quaternary structure, in the presence of PdxT, forms a dodecamer of heterodimers.

The catalysed reaction is aldehydo-D-ribose 5-phosphate + D-glyceraldehyde 3-phosphate + L-glutamine = pyridoxal 5'-phosphate + L-glutamate + phosphate + 3 H2O + H(+). Its pathway is cofactor biosynthesis; pyridoxal 5'-phosphate biosynthesis. Functionally, catalyzes the formation of pyridoxal 5'-phosphate from ribose 5-phosphate (RBP), glyceraldehyde 3-phosphate (G3P) and ammonia. The ammonia is provided by the PdxT subunit. Can also use ribulose 5-phosphate and dihydroxyacetone phosphate as substrates, resulting from enzyme-catalyzed isomerization of RBP and G3P, respectively. The polypeptide is Pyridoxal 5'-phosphate synthase subunit PdxS (Natranaerobius thermophilus (strain ATCC BAA-1301 / DSM 18059 / JW/NM-WN-LF)).